The following is a 185-amino-acid chain: Capsid protein (185 aa).

The interval 135–185 is disordered; that stretch reads PNAPILSTLPETTVVRRRDRGRSPRRRTPSPRRRRSQSPRRRRSQSRESQC. A compositionally biased stretch (basic residues) spans 149-178; sequence VRRRDRGRSPRRRTPSPRRRRSQSPRRRRS. Ser-157, Ser-164, and Ser-172 each carry phosphoserine; by host. A 1; half-length repeat occupies 157-163; the sequence is SPRRRTP. The 3 X 8 AA repeats of S-P-R-R-R-[PR]-S-Q stretch occupies residues 157–179; sequence SPRRRTPSPRRRRSQSPRRRRSQ. The short motif at 160–177 is the Bipartite nuclear localization signal element; the sequence is RRTPSPRRRRSQSPRRRR. Repeat copies occupy residues 164–171 and 172–179. The RNA binding stretch occupies residues 179–185; sequence QSRESQC.

This sequence belongs to the orthohepadnavirus core antigen family. In terms of assembly, homodimerizes, then multimerizes. Interacts with cytosol exposed regions of viral L glycoprotein present in the reticulum-to-Golgi compartment. Interacts with human FLNB. Phosphorylated form interacts with host importin alpha; this interaction depends on the exposure of the NLS, which itself depends upon genome maturation and/or phosphorylation of the capsid protein. Interacts with host NUP153. Phosphorylated by host SRPK1, SRPK2, and maybe protein kinase C or GAPDH. Phosphorylation is critical for pregenomic RNA packaging. Protein kinase C phosphorylation is stimulated by HBx protein and may play a role in transport of the viral genome to the nucleus at the late step during the viral replication cycle.

Its subcellular location is the virion. The protein localises to the host cytoplasm. Self assembles to form an icosahedral capsid. Most capsids appear to be large particles with an icosahedral symmetry of T=4 and consist of 240 copies of capsid protein, though a fraction forms smaller T=3 particles consisting of 180 capsid proteins. Entering capsids are transported along microtubules to the nucleus. Phosphorylation of the capsid is thought to induce exposure of nuclear localization signal in the C-terminal portion of the capsid protein that allows binding to the nuclear pore complex via the importin (karyopherin-) alpha and beta. Capsids are imported in intact form through the nuclear pore into the nuclear basket, where it probably binds NUP153. Only capsids that contain the mature viral genome can release the viral DNA and capsid protein into the nucleoplasm. Immature capsids get stuck in the basket. Capsids encapsulate the pre-genomic RNA and the P protein. Pre-genomic RNA is reverse-transcribed into DNA while the capsid is still in the cytoplasm. The capsid can then either be directed to the nucleus, providing more genomes for transcription, or bud through the endoplasmic reticulum to provide new virions. The protein is Capsid protein of Hepatitis B virus genotype A3 (isolate Cameroon/CMR711/1994) (HBV-A).